Reading from the N-terminus, the 104-residue chain is V-type ATP synthase subunit F (104 aa).

Belongs to the V-ATPase F subunit family.

Functionally, produces ATP from ADP in the presence of a proton gradient across the membrane. This Thermus thermophilus (strain ATCC 27634 / DSM 579 / HB8) protein is V-type ATP synthase subunit F (atpF).